A 141-amino-acid polypeptide reads, in one-letter code: Large ribosomal subunit protein uL11 (141 aa).

Belongs to the universal ribosomal protein uL11 family. As to quaternary structure, part of the ribosomal stalk of the 50S ribosomal subunit. Interacts with L10 and the large rRNA to form the base of the stalk. L10 forms an elongated spine to which L12 dimers bind in a sequential fashion forming a multimeric L10(L12)X complex. Post-translationally, one or more lysine residues are methylated.

In terms of biological role, forms part of the ribosomal stalk which helps the ribosome interact with GTP-bound translation factors. This chain is Large ribosomal subunit protein uL11, found in Pseudothermotoga lettingae (strain ATCC BAA-301 / DSM 14385 / NBRC 107922 / TMO) (Thermotoga lettingae).